Consider the following 279-residue polypeptide: uncharacterized protein (279 aa).

The N-terminal stretch at 1 to 19 is a signal peptide; it reads MKLKLYLIPLLASGIILSA. Cys20 carries the N-palmitoyl cysteine lipid modification. Cys20 carries S-diacylglycerol cysteine lipidation.

This sequence belongs to the MG439/MG440 family.

It is found in the cell membrane. This is an uncharacterized protein from Mycoplasma pneumoniae (strain ATCC 29342 / M129 / Subtype 1) (Mycoplasmoides pneumoniae).